We begin with the raw amino-acid sequence, 233 residues long: Ion-translocating oxidoreductase complex subunit E (233 aa).

6 helical membrane passes run 18-38 (ALVQ…ATNA), 39-59 (LGLG…VSAL), 69-89 (IPIY…LINA), 92-112 (FGLY…CIVI), 128-148 (ALDG…LGAL), and 182-202 (PFLL…LLAG).

Belongs to the NqrDE/RnfAE family. The complex is composed of six subunits: RnfA, RnfB, RnfC, RnfD, RnfE and RnfG.

It is found in the cell inner membrane. In terms of biological role, part of a membrane-bound complex that couples electron transfer with translocation of ions across the membrane. This chain is Ion-translocating oxidoreductase complex subunit E, found in Yersinia pseudotuberculosis serotype O:3 (strain YPIII).